Reading from the N-terminus, the 267-residue chain is tRNA pseudouridine synthase A (267 aa).

Asp55 acts as the Nucleophile in catalysis. Tyr111 provides a ligand contact to substrate.

It belongs to the tRNA pseudouridine synthase TruA family.

The enzyme catalyses uridine(38/39/40) in tRNA = pseudouridine(38/39/40) in tRNA. Functionally, formation of pseudouridine at positions 38, 39 and 40 in the anticodon stem and loop of transfer RNAs. This chain is tRNA pseudouridine synthase A, found in Thermococcus kodakarensis (strain ATCC BAA-918 / JCM 12380 / KOD1) (Pyrococcus kodakaraensis (strain KOD1)).